Reading from the N-terminus, the 432-residue chain is Adenylosuccinate synthetase (432 aa).

Residues 12-18 (GDEGKGK) and 40-42 (GHT) each bind GTP. Catalysis depends on D13, which acts as the Proton acceptor. Residues D13 and G40 each contribute to the Mg(2+) site. IMP is bound by residues 13 to 16 (DEGK), 38 to 41 (NAGH), T131, R145, Q226, T241, and R305. H41 functions as the Proton donor in the catalytic mechanism. Substrate is bound at residue 301-307 (ATTGRPR). GTP-binding positions include R307, 333–335 (KLD), and 415–417 (STG).

It belongs to the adenylosuccinate synthetase family. In terms of assembly, homodimer. Requires Mg(2+) as cofactor.

Its subcellular location is the cytoplasm. It catalyses the reaction IMP + L-aspartate + GTP = N(6)-(1,2-dicarboxyethyl)-AMP + GDP + phosphate + 2 H(+). It participates in purine metabolism; AMP biosynthesis via de novo pathway; AMP from IMP: step 1/2. Its function is as follows. Plays an important role in the de novo pathway of purine nucleotide biosynthesis. Catalyzes the first committed step in the biosynthesis of AMP from IMP. This chain is Adenylosuccinate synthetase, found in Magnetococcus marinus (strain ATCC BAA-1437 / JCM 17883 / MC-1).